Here is a 180-residue protein sequence, read N- to C-terminus: Chorion protein S19 (180 aa).

The signal sequence occupies residues 1 to 21 (MNTFATLAVLFCACLIGNCHG).

Belongs to the chorion protein S19 family.

It is found in the secreted. Its function is as follows. Chorion membrane (egg shell) protein; plays a role in protecting the egg from the environment. This is Chorion protein S19 (Cp19) from Drosophila subobscura (Fruit fly).